Here is a 348-residue protein sequence, read N- to C-terminus: MLCLSLMRIFCSKCLEEQECPLPWELEKYEIWVKKEAETNEKWGEDPYNRPIERLLKYSVINLDKPSGPTSHQVVAWVRDIVGVKAGHGGTLDPKVTGVLPIAIGEATKVLQTLLIAGKEYVALMHLHKEVSEKDIIKVMSKFVGTIIQTPPLRSAVKKRPRKKKVYCIKIIEIDGKDVLFRVSTQGGVYIRKLIHDIGVKLGVGAHMQELRRIKSGPFHENNSVYLQDIVDSLYFWKEEGNEEYIRKVFLPVEEAVKHLKKIYILDSAVAAIVHGANLAVPGIAKLYSNIKKGDLVSIHTLKGELVAIGIALMDSKEMLEKKRGIAVDIERVFMKPGLYPKMWVSQG.

Residue D93 is the Nucleophile of the active site. Positions 260-335 (LKKIYILDSA…IAVDIERVFM (76 aa)) constitute a PUA domain.

It belongs to the pseudouridine synthase TruB family. Type 2 subfamily.

It carries out the reaction uridine(55) in tRNA = pseudouridine(55) in tRNA. Could be responsible for synthesis of pseudouridine from uracil-55 in the psi GC loop of transfer RNAs. The polypeptide is Probable tRNA pseudouridine synthase B (Nanoarchaeum equitans (strain Kin4-M)).